We begin with the raw amino-acid sequence, 396 residues long: Lysophospholipid transporter LplT (396 aa).

Topologically, residues 1–17 (MSESVHTNTSLWSKGMK) are periplasmic. Residues 18–38 (AVIVAQFLSAFGDNALLFATL) traverse the membrane as a helical segment. The Cytoplasmic segment spans residues 39 to 52 (ALLKAQFYPEWSQP). A helical transmembrane segment spans residues 53–73 (ILQMVFVGAYILLAPFVGQVA). At 74 to 90 (DSFAKGRVMMFANGLKL) the chain is on the periplasmic side. A helical membrane pass occupies residues 91-111 (LGAASICFGINPFLGYTLVGV). The Cytoplasmic segment spans residues 112 to 144 (GAAAYSPAKYGILGELTTGSKLVKANGLMEASA). Residues 145-165 (IAAILLGSVAGGVLADWHVLV) traverse the membrane as a helical segment. Position 166 (alanine 166) is a topological domain, periplasmic. The chain crosses the membrane as a helical span at residues 167 to 187 (LAACALAYGGAVVANIYIPKL). At 188-225 (AARPGQSWNLINMTRSFLNACTSLWCNGETRFSLVGTS) the chain is on the cytoplasmic side. Residues 226-246 (LFWGAGVTLRFLLVLWVPVAL) traverse the membrane as a helical segment. The Periplasmic portion of the chain corresponds to 247-255 (GITDNATPT). The helical transmembrane segment at 256–276 (YLNAMVAIGIVVGAGAAAKLV) threads the bilayer. The Cytoplasmic portion of the chain corresponds to 277–279 (TLE). A helical membrane pass occupies residues 280–300 (TVSRCMPAGILIGVVVPIFSL). At 301-303 (QHE) the chain is on the periplasmic side. The chain crosses the membrane as a helical span at residues 304–324 (LLPAYALLMLIGVLGGFFVVP). Residues 325 to 342 (LNALLQERGKKSVGAGNA) lie on the Cytoplasmic side of the membrane. The helical transmembrane segment at 343 to 363 (IAVQNLGENSAMLLMLGIYSL) threads the bilayer. Over 364 to 365 (AV) the chain is Periplasmic. The helical transmembrane segment at 366-386 (MVGIPVVPIGIGFGALFALAI) threads the bilayer. The Cytoplasmic portion of the chain corresponds to 387 to 396 (TALWIWQRRH).

The protein belongs to the major facilitator superfamily. LplT (TC 2.A.1.42) family.

It is found in the cell inner membrane. Catalyzes the facilitated diffusion of 2-acyl-glycero-3-phosphoethanolamine (2-acyl-GPE) into the cell. The chain is Lysophospholipid transporter LplT from Shigella flexneri.